An 877-amino-acid polypeptide reads, in one-letter code: Alanine--tRNA ligase (877 aa).

Zn(2+) is bound by residues His-565, His-569, Cys-667, and His-671.

This sequence belongs to the class-II aminoacyl-tRNA synthetase family. Requires Zn(2+) as cofactor.

The protein localises to the cytoplasm. The catalysed reaction is tRNA(Ala) + L-alanine + ATP = L-alanyl-tRNA(Ala) + AMP + diphosphate. Its function is as follows. Catalyzes the attachment of alanine to tRNA(Ala) in a two-step reaction: alanine is first activated by ATP to form Ala-AMP and then transferred to the acceptor end of tRNA(Ala). Also edits incorrectly charged Ser-tRNA(Ala) and Gly-tRNA(Ala) via its editing domain. This chain is Alanine--tRNA ligase, found in Acidithiobacillus ferridurans.